The chain runs to 515 residues: Maturase K (515 aa).

This sequence belongs to the intron maturase 2 family. MatK subfamily.

It is found in the plastid. The protein resides in the chloroplast. Functionally, usually encoded in the trnK tRNA gene intron. Probably assists in splicing its own and other chloroplast group II introns. In Pinus roxburghii (Chir pine), this protein is Maturase K.